The primary structure comprises 368 residues: Flagellar P-ring protein (368 aa).

The N-terminal stretch at 1 to 24 (MDKPMKRIFVVLVILLVLPQLALA) is a signal peptide.

This sequence belongs to the FlgI family. In terms of assembly, the basal body constitutes a major portion of the flagellar organelle and consists of four rings (L,P,S, and M) mounted on a central rod.

The protein resides in the periplasm. Its subcellular location is the bacterial flagellum basal body. Its function is as follows. Assembles around the rod to form the L-ring and probably protects the motor/basal body from shearing forces during rotation. In Geobacter sulfurreducens (strain ATCC 51573 / DSM 12127 / PCA), this protein is Flagellar P-ring protein.